Reading from the N-terminus, the 293-residue chain is 4-hydroxy-tetrahydrodipicolinate synthase (293 aa).

Position 45 (threonine 45) interacts with pyruvate. Tyrosine 133 functions as the Proton donor/acceptor in the catalytic mechanism. Lysine 161 functions as the Schiff-base intermediate with substrate in the catalytic mechanism. Isoleucine 203 lines the pyruvate pocket.

The protein belongs to the DapA family. Homotetramer; dimer of dimers.

The protein resides in the cytoplasm. It carries out the reaction L-aspartate 4-semialdehyde + pyruvate = (2S,4S)-4-hydroxy-2,3,4,5-tetrahydrodipicolinate + H2O + H(+). The protein operates within amino-acid biosynthesis; L-lysine biosynthesis via DAP pathway; (S)-tetrahydrodipicolinate from L-aspartate: step 3/4. In terms of biological role, catalyzes the condensation of (S)-aspartate-beta-semialdehyde [(S)-ASA] and pyruvate to 4-hydroxy-tetrahydrodipicolinate (HTPA). The protein is 4-hydroxy-tetrahydrodipicolinate synthase of Syntrophotalea carbinolica (strain DSM 2380 / NBRC 103641 / GraBd1) (Pelobacter carbinolicus).